A 111-amino-acid chain; its full sequence is 2Fe-2S ferredoxin (111 aa).

Residues M1–N104 enclose the 2Fe-2S ferredoxin-type domain. Positions 42, 48, 51, and 87 each coordinate [2Fe-2S] cluster.

The protein belongs to the adrenodoxin/putidaredoxin family. [2Fe-2S] cluster is required as a cofactor.

Ferredoxin are iron-sulfur proteins that transfer electrons in a wide variety of metabolic reactions. This chain is 2Fe-2S ferredoxin (fdx), found in Buchnera aphidicola subsp. Schizaphis graminum (strain Sg).